Reading from the N-terminus, the 275-residue chain is NAD kinase (275 aa).

Aspartate 68 functions as the Proton acceptor in the catalytic mechanism. NAD(+) is bound by residues 68–69 (DG), arginine 73, 136–137 (NE), lysine 147, arginine 164, aspartate 166, 177–182 (TAYAMS), alanine 201, and glutamine 236.

The protein belongs to the NAD kinase family. It depends on a divalent metal cation as a cofactor.

The protein localises to the cytoplasm. It catalyses the reaction NAD(+) + ATP = ADP + NADP(+) + H(+). Its function is as follows. Involved in the regulation of the intracellular balance of NAD and NADP, and is a key enzyme in the biosynthesis of NADP. Catalyzes specifically the phosphorylation on 2'-hydroxyl of the adenosine moiety of NAD to yield NADP. The chain is NAD kinase from Methanosarcina barkeri (strain Fusaro / DSM 804).